A 651-amino-acid polypeptide reads, in one-letter code: Chaperone protein dnaK1 (651 aa).

T197 carries the post-translational modification Phosphothreonine; by autocatalysis.

This sequence belongs to the heat shock protein 70 family.

Its function is as follows. Acts as a chaperone. In Thermosynechococcus vestitus (strain NIES-2133 / IAM M-273 / BP-1), this protein is Chaperone protein dnaK1 (dnaK1).